We begin with the raw amino-acid sequence, 416 residues long: Glutamyl-tRNA reductase (416 aa).

Substrate contacts are provided by residues 49–52 (TCNR), Ser105, 110–112 (EPQ), and Gln116. Catalysis depends on Cys50, which acts as the Nucleophile. 185–190 (GAGETI) provides a ligand contact to NADP(+).

It belongs to the glutamyl-tRNA reductase family. In terms of assembly, homodimer.

It catalyses the reaction (S)-4-amino-5-oxopentanoate + tRNA(Glu) + NADP(+) = L-glutamyl-tRNA(Glu) + NADPH + H(+). The protein operates within porphyrin-containing compound metabolism; protoporphyrin-IX biosynthesis; 5-aminolevulinate from L-glutamyl-tRNA(Glu): step 1/2. Its function is as follows. Catalyzes the NADPH-dependent reduction of glutamyl-tRNA(Glu) to glutamate 1-semialdehyde (GSA). This is Glutamyl-tRNA reductase from Shewanella putrefaciens (strain CN-32 / ATCC BAA-453).